A 249-amino-acid chain; its full sequence is Small ribosomal subunit protein uS3 (249 aa).

A KH type-2 domain is found at 38–106; sequence IRDFLSKGLE…QVQLNILEVK (69 aa). Residues 218-233 show a composition bias toward basic and acidic residues; the sequence is ARDDRGSRRGRNDRPR. The disordered stretch occupies residues 218–249; sequence ARDDRGSRRGRNDRPRRGGGRRRRAAEQKQEG.

Belongs to the universal ribosomal protein uS3 family. As to quaternary structure, part of the 30S ribosomal subunit. Forms a tight complex with proteins S10 and S14.

Binds the lower part of the 30S subunit head. Binds mRNA in the 70S ribosome, positioning it for translation. In Corynebacterium kroppenstedtii (strain DSM 44385 / JCM 11950 / CIP 105744 / CCUG 35717), this protein is Small ribosomal subunit protein uS3.